A 448-amino-acid chain; its full sequence is Phosphoglucosamine mutase (448 aa).

The active-site Phosphoserine intermediate is the S102. S102, D242, D244, and D246 together coordinate Mg(2+). Residue S102 is modified to Phosphoserine.

The protein belongs to the phosphohexose mutase family. Mg(2+) is required as a cofactor. In terms of processing, activated by phosphorylation.

The catalysed reaction is alpha-D-glucosamine 1-phosphate = D-glucosamine 6-phosphate. Its function is as follows. Catalyzes the conversion of glucosamine-6-phosphate to glucosamine-1-phosphate. The polypeptide is Phosphoglucosamine mutase (Brevibacillus brevis (strain 47 / JCM 6285 / NBRC 100599)).